Reading from the N-terminus, the 552-residue chain is Cytochrome c oxidase subunit 1 (552 aa).

A helical membrane pass occupies residues 35 to 55 (VIGIQYLVTAFIFYLIGGLMA). Residue H82 participates in Fe(II)-heme a binding. 6 helical membrane-spanning segments follow: residues 85 to 105 (IMIF…YLVP), 120 to 140 (ALAF…FLFG), 164 to 184 (WILA…NFIV), 211 to 231 (LLAL…LFDI), 252 to 272 (LFWF…FGIM), and 284 to 304 (IFGY…GLFV). Cu cation contacts are provided by H258 and Y262. The 1'-histidyl-3'-tyrosine (His-Tyr) cross-link spans 258-262 (HPAVY). Positions 307 and 308 each coordinate Cu cation. The next 5 membrane-spanning stretches (helical) occupy residues 321 to 341 (FFTI…FSWV), 355 to 375 (MLFA…GVTL), 390 to 410 (VVAH…YAGI), 426 to 446 (LGIL…LPMH), and 470 to 490 (ICTI…INII). H393 serves as a coordination point for heme a3. H395 contributes to the Fe(II)-heme a binding site.

Belongs to the heme-copper respiratory oxidase family. Requires Cu(2+) as cofactor. Heme is required as a cofactor.

The protein resides in the cell membrane. The enzyme catalyses 4 Fe(II)-[cytochrome c] + O2 + 8 H(+)(in) = 4 Fe(III)-[cytochrome c] + 2 H2O + 4 H(+)(out). Its pathway is energy metabolism; oxidative phosphorylation. Functionally, cytochrome c oxidase is the component of the respiratory chain that catalyzes the reduction of oxygen to water. Subunits 1-3 form the functional core of the enzyme complex. CO I is the catalytic subunit of the enzyme. Electrons originating in cytochrome c are transferred via the copper A center of subunit 2 and heme A of subunit 1 to the bimetallic center formed by heme A3 and copper B. In Thermostichus vulcanus (Synechococcus vulcanus), this protein is Cytochrome c oxidase subunit 1 (ctaD).